Consider the following 288-residue polypeptide: Pantothenate synthetase (288 aa).

35 to 42 (MGALHDGH) lines the ATP pocket. His42 (proton donor) is an active-site residue. Residue Gln66 participates in (R)-pantoate binding. Residue Gln66 coordinates beta-alanine. 152 to 155 (GEKD) contributes to the ATP binding site. Gln158 is a binding site for (R)-pantoate. ATP-binding positions include Gly181 and 189 to 192 (LSSR).

It belongs to the pantothenate synthetase family. In terms of assembly, homodimer.

It is found in the cytoplasm. The catalysed reaction is (R)-pantoate + beta-alanine + ATP = (R)-pantothenate + AMP + diphosphate + H(+). Its pathway is cofactor biosynthesis; (R)-pantothenate biosynthesis; (R)-pantothenate from (R)-pantoate and beta-alanine: step 1/1. Functionally, catalyzes the condensation of pantoate with beta-alanine in an ATP-dependent reaction via a pantoyl-adenylate intermediate. This chain is Pantothenate synthetase, found in Maricaulis maris (strain MCS10) (Caulobacter maris).